A 75-amino-acid polypeptide reads, in one-letter code: UPF0291 protein lmo1304 (75 aa).

Residues 56-75 (DPNGKDVTPHKVKQLRKNKY) form a disordered region. Basic residues predominate over residues 65–75 (HKVKQLRKNKY).

It belongs to the UPF0291 family.

Its subcellular location is the cytoplasm. The polypeptide is UPF0291 protein lmo1304 (Listeria monocytogenes serovar 1/2a (strain ATCC BAA-679 / EGD-e)).